The chain runs to 371 residues: Protein disulfide isomerase-like 2-2 (371 aa).

A signal peptide spans 1–27 (MAIPRISPRKTLPLFAALALALAWAFA). 2 consecutive Thioredoxin domains span residues 28 to 143 (APAF…TEGG) and 147 to 262 (KLAT…EKCG). Catalysis depends on nucleophile residues cysteine 64, cysteine 67, cysteine 183, and cysteine 186. Cystine bridges form between cysteine 64/cysteine 67 and cysteine 183/cysteine 186.

The protein belongs to the protein disulfide isomerase family.

Its subcellular location is the secreted. It catalyses the reaction Catalyzes the rearrangement of -S-S- bonds in proteins.. Acts as a protein-folding catalyst that interacts with nascent polypeptides to catalyze the formation, isomerization, and reduction or oxidation of disulfide bonds. May play a role in storage protein biogenesis. The chain is Protein disulfide isomerase-like 2-2 (PDIL2-2) from Oryza sativa subsp. japonica (Rice).